A 655-amino-acid polypeptide reads, in one-letter code: Putative sensor protein Sfri_3689 (655 aa).

Residues 1 to 17 form the signal peptide; sequence MKTLLLLLIIITMPVLA. The helical transmembrane segment at 252-272 threads the bilayer; that stretch reads FALAILVAIMSAIGMIFTGFI. In terms of domain architecture, Histidine kinase spans 419 to 653; the sequence is GIAHEINNPT…QIRLIFALAQ (235 aa). Residue histidine 422 is modified to Phosphohistidine; by autocatalysis.

Its subcellular location is the cell membrane. The catalysed reaction is ATP + protein L-histidine = ADP + protein N-phospho-L-histidine.. The sequence is that of Putative sensor protein Sfri_3689 from Shewanella frigidimarina (strain NCIMB 400).